We begin with the raw amino-acid sequence, 878 residues long: Longitudinals lacking protein, isoforms N/O/W/X/Y (878 aa).

Residues 32–97 (VDCTLAAEGK…MYRGEVNISQ (66 aa)) enclose the BTB domain. Disordered stretches follow at residues 115–200 (LSDN…SSVL), 228–340 (SSGP…ASAS), and 542–583 (QIVK…QTHA). Low complexity-rich tracts occupy residues 162-175 (SGDV…SSSP), 228-251 (SSGP…LTST), 263-293 (TSST…QTTS), 329-340 (NSATGPNPASAS), and 546-569 (QQHQ…QQQQ). Residues 709–731 (YACNVCGKTYKIKGSLKRHKNYE) form a C2H2-type 1; degenerate zinc finger. The segment at 794-816 (FQCDFCLKWFKRRSHLNRHKKLH) adopts a C2H2-type 2 zinc-finger fold. The interval 826-863 (SKQKPKTTSGQNLSHDANTDDEVATTNPAATEDESNYP) is disordered. The segment covering 831-841 (KTTSGQNLSHD) has biased composition (polar residues).

By stage 11, isoform W, isoform X and isoform Y are expressed throughout the mesoderm, whereas isoform O is expressed in both mesoderm and ectoderm. From stage 15, expression of isoform O expands to all tissues, whereas expression of isoform W, isoform X and isoform Y becomes restricted during later stages; starting from stage 14 to 16, isoform W, isoform X and isoform Y are expressed in muscle. From stages 14 and 15, isoform W and isoform Y are expressed in the gut. For some isoforms, expression is also seen in specific types of cells in the embryo; isoform O is expressed in the ventral furrow at stage 5 and in the dorsal epidermis from stage 7. Isoform Y shows prominent expression in the gonad starting at stage 15.

The protein resides in the nucleus. Functionally, putative transcription factor required for axon growth and guidance in the central and peripheral nervous systems. Repels CNS axons away from the midline by promoting the expression of the midline repellent sli and its receptor robo. The protein is Longitudinals lacking protein, isoforms N/O/W/X/Y of Drosophila melanogaster (Fruit fly).